Here is a 235-residue protein sequence, read N- to C-terminus: dITP/XTP pyrophosphatase (235 aa).

7 to 12 (STNPGK) lines the substrate pocket. The active-site Proton acceptor is Asp70. Asp70 is a binding site for Mg(2+). Substrate is bound by residues Ser71, 180–183 (FGYD), Lys211, and 216–217 (HR).

It belongs to the HAM1 NTPase family. Homodimer. The cofactor is Mg(2+).

It catalyses the reaction XTP + H2O = XMP + diphosphate + H(+). The enzyme catalyses dITP + H2O = dIMP + diphosphate + H(+). The catalysed reaction is ITP + H2O = IMP + diphosphate + H(+). Pyrophosphatase that catalyzes the hydrolysis of nucleoside triphosphates to their monophosphate derivatives, with a high preference for the non-canonical purine nucleotides XTP (xanthosine triphosphate), dITP (deoxyinosine triphosphate) and ITP. Seems to function as a house-cleaning enzyme that removes non-canonical purine nucleotides from the nucleotide pool, thus preventing their incorporation into DNA/RNA and avoiding chromosomal lesions. This Anaeromyxobacter dehalogenans (strain 2CP-C) protein is dITP/XTP pyrophosphatase.